The sequence spans 1033 residues: Kinesin-like protein KIN-4A (1033 aa).

In terms of domain architecture, Kinesin motor spans 11 to 366; it reads CVKVAVHVRP…LKYANRARNI (356 aa). Position 89-96 (89-96) interacts with ATP; it reads GQTGSGKT. Positions 443-462 are disordered; sequence QDGSPCSVESDGLKRNLRSR. Positions 453–462 are enriched in basic and acidic residues; sequence DGLKRNLRSR. A coiled-coil region spans residues 525-638; it reads ALKQHFGKKI…IKQEAEQFRQ (114 aa). The segment at 763-785 is disordered; the sequence is DELDSKGPSPSRGKNGCARGSSL. Residues 863–895 adopt a coiled-coil conformation; it reads IEIREMKEQLKELVGLLRQSELQRKEVENELKL.

The protein belongs to the TRAFAC class myosin-kinesin ATPase superfamily. Kinesin family. KIN-4 subfamily. Homodimer. As to expression, expressed in cotton fibers.

It is found in the cytoplasm. In terms of biological role, kinesin-like motor protein involved in the control of the oriented deposition of cellulose microfibrils. The polypeptide is Kinesin-like protein KIN-4A (Gossypium hirsutum (Upland cotton)).